The primary structure comprises 265 residues: Methyl-coenzyme M reductase II subunit gamma (265 aa).

Position 123 (R123) interacts with coenzyme M.

This sequence belongs to the methyl-coenzyme M reductase gamma subunit family. As to quaternary structure, MCR is a hexamer of two alpha, two beta, and two gamma chains, forming a dimer of heterotrimers. Requires coenzyme F430 as cofactor.

The catalysed reaction is coenzyme B + methyl-coenzyme M = methane + coenzyme M-coenzyme B heterodisulfide. Its pathway is one-carbon metabolism; methyl-coenzyme M reduction; methane from methyl-coenzyme M: step 1/1. Its function is as follows. Component of the methyl-coenzyme M reductase (MCR) I that catalyzes the reductive cleavage of methyl-coenzyme M (CoM-S-CH3 or 2-(methylthio)ethanesulfonate) using coenzyme B (CoB or 7-mercaptoheptanoylthreonine phosphate) as reductant which results in the production of methane and the mixed heterodisulfide of CoB and CoM (CoM-S-S-CoB). This is the final step in methanogenesis. In Methanothermobacter marburgensis (strain ATCC BAA-927 / DSM 2133 / JCM 14651 / NBRC 100331 / OCM 82 / Marburg) (Methanobacterium thermoautotrophicum), this protein is Methyl-coenzyme M reductase II subunit gamma (mrtG).